Consider the following 326-residue polypeptide: Glyoxylate/hydroxypyruvate reductase B (326 aa).

Catalysis depends on residues Arg237 and Glu266. His285 (proton donor) is an active-site residue.

It belongs to the D-isomer specific 2-hydroxyacid dehydrogenase family. GhrB subfamily. Homodimer.

It localises to the cytoplasm. The catalysed reaction is glycolate + NADP(+) = glyoxylate + NADPH + H(+). It carries out the reaction (R)-glycerate + NAD(+) = 3-hydroxypyruvate + NADH + H(+). It catalyses the reaction (R)-glycerate + NADP(+) = 3-hydroxypyruvate + NADPH + H(+). Functionally, catalyzes the NADPH-dependent reduction of glyoxylate and hydroxypyruvate into glycolate and glycerate, respectively. The protein is Glyoxylate/hydroxypyruvate reductase B of Yersinia pseudotuberculosis serotype O:3 (strain YPIII).